A 282-amino-acid polypeptide reads, in one-letter code: Bifunctional protein FolD (282 aa).

NADP(+) contacts are provided by residues 164–166 and serine 189; that span reads GRS.

The protein belongs to the tetrahydrofolate dehydrogenase/cyclohydrolase family. In terms of assembly, homodimer.

It carries out the reaction (6R)-5,10-methylene-5,6,7,8-tetrahydrofolate + NADP(+) = (6R)-5,10-methenyltetrahydrofolate + NADPH. The enzyme catalyses (6R)-5,10-methenyltetrahydrofolate + H2O = (6R)-10-formyltetrahydrofolate + H(+). It functions in the pathway one-carbon metabolism; tetrahydrofolate interconversion. Functionally, catalyzes the oxidation of 5,10-methylenetetrahydrofolate to 5,10-methenyltetrahydrofolate and then the hydrolysis of 5,10-methenyltetrahydrofolate to 10-formyltetrahydrofolate. The polypeptide is Bifunctional protein FolD (Lactobacillus gasseri (strain ATCC 33323 / DSM 20243 / BCRC 14619 / CIP 102991 / JCM 1131 / KCTC 3163 / NCIMB 11718 / NCTC 13722 / AM63)).